Reading from the N-terminus, the 311-residue chain is Taste receptor type 2 member 9 (311 aa).

Residues 1 to 9 are Extracellular-facing; the sequence is MPSTIEAIY. Residues 10-32 traverse the membrane as a helical segment; sequence IILIAGELTIGIWGNGFIVLVNC. The Cytoplasmic segment spans residues 33–52; the sequence is IDWLKRRDVSLIDIILISLA. The chain crosses the membrane as a helical span at residues 53–72; sequence ISRICLLCVISLDGFFILLF. Residues 73 to 86 lie on the Extracellular side of the membrane; it reads PGTYDINVLESIMD. Residues 87–109 traverse the membrane as a helical segment; sequence AVWTFANNSSLWFTSCLSIFYLL. The Cytoplasmic portion of the chain corresponds to 110-128; that stretch reads KIANISHPFFFWLKLKINK. Residues 129-146 form a helical membrane-spanning segment; that stretch reads VILAILLGSFLISLIISF. At 147-179 the chain is on the extracellular side; it reads PINGXWYHLFKVSHEENITWAFKVSTIPGAFKQ. N-linked (GlcNAc...) asparagine glycosylation is present at Asn163. The helical transmembrane segment at 180–202 threads the bilayer; the sequence is LTLNLGAMVPFMLCLISFFLLLF. Residues 203–233 lie on the Cytoplasmic side of the membrane; the sequence is SLVRHTKQIQLHATGLRDPSTEAHMRAIKAV. A helical membrane pass occupies residues 234 to 256; that stretch reads IIFLLLLIVYYPVFLVMTSSTLI. The Extracellular portion of the chain corresponds to 257 to 260; that stretch reads PQGK. A helical membrane pass occupies residues 261-283; the sequence is LVLMIGDIVTVIFPSSHSFILIM. At 284–311 the chain is on the cytoplasmic side; the sequence is GNSKLREAFLKMLRFVKGFLRRRKPFGP.

The protein belongs to the G-protein coupled receptor T2R family.

It localises to the membrane. Functionally, gustducin-coupled receptor implicated in the perception of bitter compounds in the oral cavity and the gastrointestinal tract. Signals through PLCB2 and the calcium-regulated cation channel TRPM5. This chain is Taste receptor type 2 member 9 (TAS2R9), found in Papio hamadryas (Hamadryas baboon).